The chain runs to 449 residues: uncharacterized protein (449 aa).

In terms of domain architecture, TRAM spans 3–61; the sequence is VWQQGATIELRIDSLSHTGEGVGRWQDRVVFVADTVPGDRLRVRLTHVKRQYAHGKVLE. 4 residues coordinate [4Fe-4S] cluster: C74, C80, C83, and C161. Residues Q283, Y312, E333, and D378 each contribute to the S-adenosyl-L-methionine site. Catalysis depends on C405, which acts as the Nucleophile.

It belongs to the class I-like SAM-binding methyltransferase superfamily. RNA M5U methyltransferase family.

This is an uncharacterized protein from Thermosynechococcus vestitus (strain NIES-2133 / IAM M-273 / BP-1).